The chain runs to 942 residues: Lambda-carrageenase (942 aa).

The signal sequence occupies residues 1 to 25; it reads MKIKILSAMVASSLLIGCVIPTVKA.

Monomer.

The protein resides in the secreted. It catalyses the reaction Endohydrolysis of (1-&gt;4)-beta-linkages in the backbone of lambda-carrageenan, resulting in the tetrasaccharide alpha-D-Galp2,6S2-(1-&gt;3)-beta-D-Galp2S-(1-&gt;4)-alpha-D-Galp2,6S2-(1-&gt;3)-D-Galp2S.. Its function is as follows. Hydrolyzes lambda-carrageenan with inversion of anomeric configuration. Does not hydrolyze iota- and kappa-carrageenans, agarose or porphyran. In Pseudoalteromonas carrageenovora (Alteromonas carrageenovora), this protein is Lambda-carrageenase.